The sequence spans 225 residues: UPF0758 protein XCV4028 (225 aa).

An MPN domain is found at 102–224 (ALSDPPSVGR…PVSFAERGWL (123 aa)). The Zn(2+) site is built by histidine 173, histidine 175, and aspartate 186. Positions 173 to 186 (HNHPSGNPEPSEAD) match the JAMM motif motif.

The protein belongs to the UPF0758 family.

This Xanthomonas euvesicatoria pv. vesicatoria (strain 85-10) (Xanthomonas campestris pv. vesicatoria) protein is UPF0758 protein XCV4028.